Here is a 224-residue protein sequence, read N- to C-terminus: MADEDITLNEDQLLESLEETNGEQETEIATEVEEEGSMQIDPELEAIKARVKEMEEEAEKIKQMQSEVDKQMAGGSTTGLATVPLSLEEKQEIDTRSVYVGNVDYGASAEELEAHFHGCGTINRVTILCNKADGHPKGFAYIEFGSKEFVETALAMNETLFRGRQIKVMSKRTNRPGLSTTNRFARGSFRGRGARVSRACCHSTFRGARRAMGYRGRANYYAPY.

A compositionally biased stretch (acidic residues) spans 1–36; the sequence is MADEDITLNEDQLLESLEETNGEQETEIATEVEEEG. Positions 1-40 are disordered; the sequence is MADEDITLNEDQLLESLEETNGEQETEIATEVEEEGSMQI. Positions 9 to 74 form a coiled coil; sequence NEDQLLESLE…QSEVDKQMAG (66 aa). The RRM domain occupies 96–173; it reads RSVYVGNVDY…RQIKVMSKRT (78 aa).

As to quaternary structure, interacts with ZC3H3. In terms of tissue distribution, expressed ubiquitously in all transcriptionally active cells.

The protein resides in the nucleus. It is found in the cytoplasm. Its function is as follows. Involved in the 3'-end formation of mRNA precursors (pre-mRNA) by the addition of a poly(A) tail of 200-250 nt to the upstream cleavage product. Stimulates poly(A) polymerase (PAPOLA) conferring processivity on the poly(A) tail elongation reaction and also controls the poly(A) tail length. Increases the affinity of poly(A) polymerase for RNA. Binds to poly(A) and to poly(G) with high affinity. May protect the poly(A) tail from degradation. Plays a role in the positive regulation of alpha-1,3 fucosylation, possibly by cooperating with swm which regulates nuclear export of fucosyltransferase FucTA. Involved in germline stem cell transit amplification, differentiation and mitosis-to-meiosis transition. This chain is Polyadenylate-binding protein 2, found in Drosophila melanogaster (Fruit fly).